Here is a 161-residue protein sequence, read N- to C-terminus: UPF0303 protein Spro_1996 (161 aa).

Belongs to the UPF0303 family.

This Serratia proteamaculans (strain 568) protein is UPF0303 protein Spro_1996.